The chain runs to 76 residues: uncharacterized protein (76 aa).

Positions 1 to 20 are cleaved as a signal peptide; it reads MKNAVLVFLLLSVFALSVNA.

As to expression, prismatic layer of shell (at protein level). Expressed primarily in the mantle with equal levels in the mantle edge and the mantle pallium.

It localises to the secreted. This is an uncharacterized protein from Margaritifera margaritifera (Freshwater pearl mussel).